We begin with the raw amino-acid sequence, 331 residues long: tRNA U34 carboxymethyltransferase (331 aa).

Residues Lys91, Trp105, Lys110, Gly130, 152-154 (DPS), 181-182 (IE), Met196, Tyr200, and Arg315 each bind carboxy-S-adenosyl-L-methionine.

It belongs to the class I-like SAM-binding methyltransferase superfamily. CmoB family. Homotetramer.

The catalysed reaction is carboxy-S-adenosyl-L-methionine + 5-hydroxyuridine(34) in tRNA = 5-carboxymethoxyuridine(34) in tRNA + S-adenosyl-L-homocysteine + H(+). In terms of biological role, catalyzes carboxymethyl transfer from carboxy-S-adenosyl-L-methionine (Cx-SAM) to 5-hydroxyuridine (ho5U) to form 5-carboxymethoxyuridine (cmo5U) at position 34 in tRNAs. The chain is tRNA U34 carboxymethyltransferase from Shewanella baltica (strain OS155 / ATCC BAA-1091).